The primary structure comprises 624 residues: DNA mismatch repair protein MutL (624 aa).

Residues 336 to 357 (GEGFHETSDSFSSRSSQHSDAR) form a disordered region. A compositionally biased stretch (low complexity) spans 344–353 (DSFSSRSSQH).

Belongs to the DNA mismatch repair MutL/HexB family.

Functionally, this protein is involved in the repair of mismatches in DNA. It is required for dam-dependent methyl-directed DNA mismatch repair. May act as a 'molecular matchmaker', a protein that promotes the formation of a stable complex between two or more DNA-binding proteins in an ATP-dependent manner without itself being part of a final effector complex. This Chlorobium phaeobacteroides (strain BS1) protein is DNA mismatch repair protein MutL.